A 482-amino-acid polypeptide reads, in one-letter code: GDP-D-glucose phosphorylase 1 (482 aa).

The interval 1–21 (MEPFPRILDDRLPRNMRRPRP) is disordered. The active-site Tele-GMP-histidine intermediate is H255. The interval 461 to 482 (MPRSPSIRHRSSTRAQSDEGSK) is disordered.

It belongs to the GDPGP1 family. In terms of tissue distribution, expressed throughout the neuronal system, in the spermatheca and anterior hypodermal cells.

The protein resides in the cytoplasm. It carries out the reaction GDP-alpha-D-glucose + phosphate = alpha-D-glucose 1-phosphate + GDP + H(+). Its function is as follows. Specific and highly efficient GDP-D-glucose phosphorylase regulating the levels of GDP-D-glucose in cells. The chain is GDP-D-glucose phosphorylase 1 from Caenorhabditis elegans.